The following is a 916-amino-acid chain: Protein translocase subunit SecA (916 aa).

Residues Q87, 105 to 109, and D507 contribute to the ATP site; that span reads GEGKT. Zn(2+) is bound by residues C900, C902, C911, and H912.

Belongs to the SecA family. Monomer and homodimer. Part of the essential Sec protein translocation apparatus which comprises SecA, SecYEG and auxiliary proteins SecDF-YajC and YidC. Zn(2+) serves as cofactor.

The protein localises to the cell inner membrane. Its subcellular location is the cytoplasm. The enzyme catalyses ATP + H2O + cellular proteinSide 1 = ADP + phosphate + cellular proteinSide 2.. Functionally, part of the Sec protein translocase complex. Interacts with the SecYEG preprotein conducting channel. Has a central role in coupling the hydrolysis of ATP to the transfer of proteins into and across the cell membrane, serving both as a receptor for the preprotein-SecB complex and as an ATP-driven molecular motor driving the stepwise translocation of polypeptide chains across the membrane. In Neisseria meningitidis serogroup A / serotype 4A (strain DSM 15465 / Z2491), this protein is Protein translocase subunit SecA.